The sequence spans 359 residues: Agropine synthesis conjugase (359 aa).

The SIS domain maps to 28-171 (TVAKFGRATA…IGGILNEREN (144 aa)).

This Rhizobium rhizogenes (Agrobacterium rhizogenes) protein is Agropine synthesis conjugase (mas2).